A 183-amino-acid polypeptide reads, in one-letter code: MSNEENKINEEALKQQDAAEVEVEAVGTDADIEWNEEADESAAKIAELEAALLASEARVKEQQDSVLRAKAEVENMRRRTEQEIDKARKYALNRFAEELLPVIDNLERAIQAADAESEAVKPLLEGVELTHKTFVDVVSKFGLKEINPEGQPFNPEWHQAMSIQESPDHESNTVMFVMQKAMN.

Over residues Met1–Lys14 the composition is skewed to basic and acidic residues. A disordered region spans residues Met1–Glu20.

The protein belongs to the GrpE family. Homodimer.

Its subcellular location is the cytoplasm. Its function is as follows. Participates actively in the response to hyperosmotic and heat shock by preventing the aggregation of stress-denatured proteins, in association with DnaK and GrpE. It is the nucleotide exchange factor for DnaK and may function as a thermosensor. Unfolded proteins bind initially to DnaJ; upon interaction with the DnaJ-bound protein, DnaK hydrolyzes its bound ATP, resulting in the formation of a stable complex. GrpE releases ADP from DnaK; ATP binding to DnaK triggers the release of the substrate protein, thus completing the reaction cycle. Several rounds of ATP-dependent interactions between DnaJ, DnaK and GrpE are required for fully efficient folding. The chain is Protein GrpE from Vibrio vulnificus (strain CMCP6).